The chain runs to 359 residues: Maleylacetate reductase 2 (359 aa).

It belongs to the iron-containing alcohol dehydrogenase family. In terms of assembly, homodimer.

It carries out the reaction 3-oxoadipate + NAD(+) = maleylacetate + NADH + H(+). It catalyses the reaction 3-oxoadipate + NADP(+) = maleylacetate + NADPH + H(+). It participates in aromatic compound metabolism; 3-chlorocatechol degradation. Its activity is regulated as follows. Inhibited by p-chloromercuribenzoate and by 3-oxoadipate, and, in a temperature-dependent manner, by manganese. Functionally, plays a major role in the degradation of chloroaromatic compounds by channeling maleylacetate and some of its substituted derivatives into the 3-oxoadipate pathway. This enzyme converts maleylacetate and 2-chloromaleylacetate with similar efficiencies. NADH is preferred to NADPH as the cosubstrate. This is Maleylacetate reductase 2 (tfdFII) from Cupriavidus pinatubonensis (strain JMP 134 / LMG 1197) (Cupriavidus necator (strain JMP 134)).